A 717-amino-acid polypeptide reads, in one-letter code: MSFNAKDMTQGGQIASMRIRMFSQIANIMLYCLFIFFWILVGLVLWIKISWQTFVNGCIYWWCTTLEGMRDLIKSQPVYEIQYYGKTFRMNAAQVLHDKYMIWCSEQLWSAFVLAAVVALVICLITFFVVSWILGRQGKQQSENEVTGGRQLTDNPKDVARMLKKDGKDSDIRIGDLPIIRDSEIQNFCLHGTVGAGKSEVIRRLANYARQRGDMVVIYDRSGEFVKSYYDPSIDKILNPLDARCAAWDLWKECLTQPDFDNTANTLIPMGTKEDPFWQGSGRTIFAEAAYLMRNDPNRSYSKLVDTLLSIKIEKLRTYLRNSPAANLVEEKIEKTAISIRAVLTNYVKAIRYLQGIEHNGEPFTIRDWMRGVREDQKNGWLFISSNADTHASLKPVISMWLSIAIRGLLAMGENRNRRVWFFCDELPTLHKLPDLVEILPEARKFGGCYVFGIQSYAQLEDIYGEKAAASLFDVMNTRAFFRSPSHKIAEFAAGEIGEKEHLKASEQYSYGADPVRDGVSTGKDMERQTLVSYSDIQSLPDLTCYVTLPGPYPAVKLSLKYQTRPKVAPEFIPRDINPEMENRLSAVLAAREAEGRQMASLFEPDVPEVVSGEDVTQAEQPQQPVSPAINDKKSDSGVNVPAGGIEQELKMKPEEEMEQQLPPGISESGEVVDMAAYEAWQQENHPDIQQQMQRREEVNINVHRERGEDVEPGDDF.

Topologically, residues 1–27 (MSFNAKDMTQGGQIASMRIRMFSQIAN) are cytoplasmic. Residues 28–47 (IMLYCLFIFFWILVGLVLWI) traverse the membrane as a helical segment. At 48–104 (KISWQTFVNGCIYWWCTTLEGMRDLIKSQPVYEIQYYGKTFRMNAAQVLHDKYMIWC) the chain is on the periplasmic side. The helical transmembrane segment at 105–130 (SEQLWSAFVLAAVVALVICLITFFVV) threads the bilayer. At 131 to 717 (SWILGRQGKQ…GEDVEPGDDF (587 aa)) the chain is on the cytoplasmic side. 192–199 (GTVGAGKS) contacts ATP. Disordered regions lie at residues 614-639 (EDVT…DSGV) and 650-669 (LKMK…ISES).

The protein belongs to the TrwB coupling protein family. In terms of assembly, interacts with relaxosome component TraM. May form a hexamer in the membrane.

Its subcellular location is the cell inner membrane. Conjugative DNA transfer (CDT) is the unidirectional transfer of ssDNA plasmid from a donor to a recipient cell. It is the central mechanism by which antibiotic resistance and virulence factors are propagated in bacterial populations. Couples the transferosome to a type IV secretion system. Probably forms a pore through which single-stranded plasmid DNA is transferred to the secretion system. The last 37 residues are important for determining plasmid specificity and transfer efficiency, with additional specificity conferred by the TraD-TraM pair. This chain is Coupling protein TraD (traD), found in Escherichia coli (strain K12).